A 158-amino-acid polypeptide reads, in one-letter code: 2-C-methyl-D-erythritol 2,4-cyclodiphosphate synthase (158 aa).

A divalent metal cation contacts are provided by Asp-9 and His-11. Residues 9–11 (DVH) and 35–36 (HS) each bind 4-CDP-2-C-methyl-D-erythritol 2-phosphate. An a divalent metal cation-binding site is contributed by His-43. Residues 57 to 59 (DIG), 62 to 66 (FPDTD), 133 to 136 (TTTE), Phe-140, and Arg-143 contribute to the 4-CDP-2-C-methyl-D-erythritol 2-phosphate site.

The protein belongs to the IspF family. Homotrimer. Requires a divalent metal cation as cofactor.

It catalyses the reaction 4-CDP-2-C-methyl-D-erythritol 2-phosphate = 2-C-methyl-D-erythritol 2,4-cyclic diphosphate + CMP. It functions in the pathway isoprenoid biosynthesis; isopentenyl diphosphate biosynthesis via DXP pathway; isopentenyl diphosphate from 1-deoxy-D-xylulose 5-phosphate: step 4/6. Involved in the biosynthesis of isopentenyl diphosphate (IPP) and dimethylallyl diphosphate (DMAPP), two major building blocks of isoprenoid compounds. Catalyzes the conversion of 4-diphosphocytidyl-2-C-methyl-D-erythritol 2-phosphate (CDP-ME2P) to 2-C-methyl-D-erythritol 2,4-cyclodiphosphate (ME-CPP) with a corresponding release of cytidine 5-monophosphate (CMP). In Haemophilus influenzae (strain PittEE), this protein is 2-C-methyl-D-erythritol 2,4-cyclodiphosphate synthase.